The following is a 259-amino-acid chain: Imidazole glycerol phosphate synthase subunit HisF (259 aa).

Active-site residues include Asp-11 and Asp-130.

Belongs to the HisA/HisF family. Heterodimer of HisH and HisF.

It is found in the cytoplasm. It catalyses the reaction 5-[(5-phospho-1-deoxy-D-ribulos-1-ylimino)methylamino]-1-(5-phospho-beta-D-ribosyl)imidazole-4-carboxamide + L-glutamine = D-erythro-1-(imidazol-4-yl)glycerol 3-phosphate + 5-amino-1-(5-phospho-beta-D-ribosyl)imidazole-4-carboxamide + L-glutamate + H(+). Its pathway is amino-acid biosynthesis; L-histidine biosynthesis; L-histidine from 5-phospho-alpha-D-ribose 1-diphosphate: step 5/9. Functionally, IGPS catalyzes the conversion of PRFAR and glutamine to IGP, AICAR and glutamate. The HisF subunit catalyzes the cyclization activity that produces IGP and AICAR from PRFAR using the ammonia provided by the HisH subunit. This Lactococcus lactis subsp. cremoris (strain SK11) protein is Imidazole glycerol phosphate synthase subunit HisF.